A 77-amino-acid polypeptide reads, in one-letter code: Ribonuclease P protein component 1 (77 aa).

Belongs to the eukaryotic/archaeal RNase P protein component 1 family. Consists of a catalytic RNA component and at least 4-5 protein subunits.

The protein resides in the cytoplasm. It carries out the reaction Endonucleolytic cleavage of RNA, removing 5'-extranucleotides from tRNA precursor.. Part of ribonuclease P, a protein complex that generates mature tRNA molecules by cleaving their 5'-ends. This chain is Ribonuclease P protein component 1, found in Sulfurisphaera tokodaii (strain DSM 16993 / JCM 10545 / NBRC 100140 / 7) (Sulfolobus tokodaii).